A 383-amino-acid chain; its full sequence is ATP phosphoribosyltransferase regulatory subunit (383 aa).

The protein belongs to the class-II aminoacyl-tRNA synthetase family. HisZ subfamily. Heteromultimer composed of HisG and HisZ subunits.

The protein resides in the cytoplasm. It participates in amino-acid biosynthesis; L-histidine biosynthesis; L-histidine from 5-phospho-alpha-D-ribose 1-diphosphate: step 1/9. In terms of biological role, required for the first step of histidine biosynthesis. May allow the feedback regulation of ATP phosphoribosyltransferase activity by histidine. In Paraburkholderia xenovorans (strain LB400), this protein is ATP phosphoribosyltransferase regulatory subunit.